Here is a 352-residue protein sequence, read N- to C-terminus: Phosphoribosylformylglycinamidine cyclo-ligase (352 aa).

This sequence belongs to the AIR synthase family.

The protein resides in the cytoplasm. The enzyme catalyses 2-formamido-N(1)-(5-O-phospho-beta-D-ribosyl)acetamidine + ATP = 5-amino-1-(5-phospho-beta-D-ribosyl)imidazole + ADP + phosphate + H(+). It participates in purine metabolism; IMP biosynthesis via de novo pathway; 5-amino-1-(5-phospho-D-ribosyl)imidazole from N(2)-formyl-N(1)-(5-phospho-D-ribosyl)glycinamide: step 2/2. This is Phosphoribosylformylglycinamidine cyclo-ligase from Nitrosospira multiformis (strain ATCC 25196 / NCIMB 11849 / C 71).